A 179-amino-acid chain; its full sequence is Inner membrane-spanning protein YciB (179 aa).

The next 5 helical transmembrane spans lie at 22–42, 50–70, 76–96, 121–141, and 149–169; these read IYAA…YSWV, MALI…FFHN, WKVT…QWVM, LAWA…AFWL, and FKVF…GIYI.

Belongs to the YciB family.

Its subcellular location is the cell inner membrane. In terms of biological role, plays a role in cell envelope biogenesis, maintenance of cell envelope integrity and membrane homeostasis. The chain is Inner membrane-spanning protein YciB from Klebsiella pneumoniae subsp. pneumoniae (strain ATCC 700721 / MGH 78578).